The chain runs to 39 residues: Photosystem II reaction center protein L (39 aa).

The helical transmembrane segment at 18–38 threads the bilayer; the sequence is SLYLGLLFVFVTGVLMSSYFF.

It belongs to the PsbL family. As to quaternary structure, PSII is composed of 1 copy each of membrane proteins PsbA, PsbB, PsbC, PsbD, PsbE, PsbF, PsbH, PsbI, PsbJ, PsbK, PsbL, PsbM, PsbT, PsbX, PsbY, PsbZ, Psb30/Ycf12, peripheral proteins PsbO, CyanoQ (PsbQ), PsbU, PsbV and a large number of cofactors. It forms dimeric complexes.

The protein localises to the cellular thylakoid membrane. Functionally, one of the components of the core complex of photosystem II (PSII). PSII is a light-driven water:plastoquinone oxidoreductase that uses light energy to abstract electrons from H(2)O, generating O(2) and a proton gradient subsequently used for ATP formation. It consists of a core antenna complex that captures photons, and an electron transfer chain that converts photonic excitation into a charge separation. This subunit is found at the monomer-monomer interface and is required for correct PSII assembly and/or dimerization. The polypeptide is Photosystem II reaction center protein L (Synechococcus sp. (strain CC9902)).